An 86-amino-acid polypeptide reads, in one-letter code: UPF0437 protein Ava_4254 (86 aa).

This sequence belongs to the UPF0437 family.

This chain is UPF0437 protein Ava_4254, found in Trichormus variabilis (strain ATCC 29413 / PCC 7937) (Anabaena variabilis).